The sequence spans 150 residues: Small ribosomal subunit protein bS6 (150 aa).

The tract at residues 99–150 (GPSAMLQKRDRDDRGERGERGFGGGGFGGGRDREDRPRRGRDREEAATEETF) is disordered. Basic and acidic residues-rich tracts occupy residues 105-118 (QKRD…RGER) and 128-144 (GRDR…REEA).

The protein belongs to the bacterial ribosomal protein bS6 family.

Binds together with bS18 to 16S ribosomal RNA. The sequence is that of Small ribosomal subunit protein bS6 from Azorhizobium caulinodans (strain ATCC 43989 / DSM 5975 / JCM 20966 / LMG 6465 / NBRC 14845 / NCIMB 13405 / ORS 571).